Reading from the N-terminus, the 83-residue chain is Cytochrome c oxidase subunit 7A2, mitochondrial (83 aa).

Residues 1-23 (MLRNLLALRQIAKRTISTSSRRQ) constitute a mitochondrion transit peptide. The Mitochondrial matrix portion of the chain corresponds to 24-48 (FENKVPEKQKLFQEDNGIPVHLKGG). An N6-acetyllysine modification is found at lysine 33. A helical membrane pass occupies residues 49-77 (IADALLYRATLILTVGGTAYAMYELAVAS). Over 78–83 (FPKKQD) the chain is Mitochondrial intermembrane.

It belongs to the cytochrome c oxidase VIIa family. Component of the cytochrome c oxidase (complex IV, CIV), a multisubunit enzyme composed of 14 subunits. The complex is composed of a catalytic core of 3 subunits MT-CO1, MT-CO2 and MT-CO3, encoded in the mitochondrial DNA, and 11 supernumerary subunits COX4I1 (or COX4I2), COX5A, COX5B, COX6A2 (or COX6A1), COX6B1 (or COX6B2), COX6C, COX7A1 (or COX7A2), COX7B, COX7C, COX8B and NDUFA4, which are encoded in the nuclear genome. The complex exists as a monomer or a dimer and forms supercomplexes (SCs) in the inner mitochondrial membrane with NADH-ubiquinone oxidoreductase (complex I, CI) and ubiquinol-cytochrome c oxidoreductase (cytochrome b-c1 complex, complex III, CIII), resulting in different assemblies (supercomplex SCI(1)III(2)IV(1) and megacomplex MCI(2)III(2)IV(2)). Interacts with PET100.

The protein localises to the mitochondrion inner membrane. The protein operates within energy metabolism; oxidative phosphorylation. Functionally, component of the cytochrome c oxidase, the last enzyme in the mitochondrial electron transport chain which drives oxidative phosphorylation. The respiratory chain contains 3 multisubunit complexes succinate dehydrogenase (complex II, CII), ubiquinol-cytochrome c oxidoreductase (cytochrome b-c1 complex, complex III, CIII) and cytochrome c oxidase (complex IV, CIV), that cooperate to transfer electrons derived from NADH and succinate to molecular oxygen, creating an electrochemical gradient over the inner membrane that drives transmembrane transport and the ATP synthase. Cytochrome c oxidase is the component of the respiratory chain that catalyzes the reduction of oxygen to water. Electrons originating from reduced cytochrome c in the intermembrane space (IMS) are transferred via the dinuclear copper A center (CU(A)) of subunit 2 and heme A of subunit 1 to the active site in subunit 1, a binuclear center (BNC) formed by heme A3 and copper B (CU(B)). The BNC reduces molecular oxygen to 2 water molecules using 4 electrons from cytochrome c in the IMS and 4 protons from the mitochondrial matrix. This chain is Cytochrome c oxidase subunit 7A2, mitochondrial (COX7A2), found in Bos taurus (Bovine).